The chain runs to 588 residues: ATP-dependent lipid A-core flippase (588 aa).

The next 6 membrane-spanning stretches (helical) occupy residues 23 to 43 (FWPV…IDAG), 56 to 76 (FITI…IGIT), 141 to 161 (DALT…TVMM), 162 to 182 (VICW…GIIV), 257 to 277 (LVIA…STVI), and 278 to 298 (TISA…IKPM). Residues 28–310 (LLGVLANILY…LTTLNATIQR (283 aa)) form the ABC transmembrane type-1 domain. The region spanning 342–576 (IEFKHVYHAY…DGHYAQLYKV (235 aa)) is the ABC transporter domain. 375-382 (GHSGSGKT) is an ATP binding site.

This sequence belongs to the ABC transporter superfamily. Lipid exporter (TC 3.A.1.106) family. As to quaternary structure, homodimer.

Its subcellular location is the cell inner membrane. The enzyme catalyses ATP + H2O + lipid A-core oligosaccharideSide 1 = ADP + phosphate + lipid A-core oligosaccharideSide 2.. In terms of biological role, involved in lipopolysaccharide (LPS) biosynthesis. Translocates lipid A-core from the inner to the outer leaflet of the inner membrane. Transmembrane domains (TMD) form a pore in the inner membrane and the ATP-binding domain (NBD) is responsible for energy generation. In Legionella pneumophila subsp. pneumophila (strain Philadelphia 1 / ATCC 33152 / DSM 7513), this protein is ATP-dependent lipid A-core flippase.